The sequence spans 121 residues: Small ribosomal subunit protein eS24 (121 aa).

The protein belongs to the eukaryotic ribosomal protein eS24 family.

This Pyrobaculum aerophilum (strain ATCC 51768 / DSM 7523 / JCM 9630 / CIP 104966 / NBRC 100827 / IM2) protein is Small ribosomal subunit protein eS24.